The sequence spans 403 residues: Accessory Sec system protein translocase subunit SecY2 (403 aa).

The next 10 membrane-spanning stretches (helical) occupy residues 17–37 (MLYTCFILFIYILGTNISIVS), 63–83 (LNIFTLGLGPWLTSMIILMLI), 105–125 (ILTLILSVIQSYFVIHEYVSK), 131–151 (DNIYLTILILVTGTMLLVWLA), 157–177 (YGIAGPMPIVMVSIIKSMMHQ), 186–206 (HIVIALLIILVIITLFILLFI), 240–260 (ITLMMSISAFVFLKSGIHFIL), 276–296 (FDSPVGISVYLVIQMLLGYFL), 339–359 (WFGLALVTVIIGIPLYFTLFV), and 366–386 (IYFSVQLIVLVYISINIAETI).

It belongs to the SecY/SEC61-alpha family. SecY2 subfamily. As to quaternary structure, may form heterotrimers with SecE and SecG subunits (Potential). Component of the accessory SecA2/SecY2 protein translocase complex required to export cell wall protein SrpA.

It is found in the cell membrane. Functionally, the central subunit of a protein translocation channel (Potential). Part of the accessory SecA2/SecY2 system specifically required to export SraP, a serine-rich repeat cell wall protein encoded upstream in the same operon. The chain is Accessory Sec system protein translocase subunit SecY2 from Staphylococcus aureus (strain NCTC 8325 / PS 47).